The sequence spans 2390 residues: MSSTLSPTDFDSLEIQGQYSDINNRWDLPDSDWDNDSSSARLFERSRIKALADEREAVQKKTFTKWVNSHLARVTCRVGDLYSDLRDGRNLLRLLEVLSGEILPKPTKGRMRIHCLENVDKALQFLKEQKVHLENMGSHDIVDGNHRLTLGLVWTIILRFQIQDISVETEDNKEKKSAKDALLLWCQMKTAGYPNVNVHNFTTSWRDGLAFNAIVHKHRPDLLDFESLKKCNAHYNLQNAFNLAEKELGLTKLLDPEDVNVDQPDEKSIITYVATYYHYFSKMKALAVEGKRIGKVLDHAMEAERLVEKYESLASELLQWIEQTIVTLNDRQLANSLSGVQNQLQSFNSYRTVEKPPKFTEKGNLEVLLFTIQSKLRANNQKVYTPREGRLISDINKAWERLEKAEHERELALRTELIRQEKLEQLAARFDRKAAMRETWLSENQRLVSQDNFGLELAAVEAAVRKHEAIETDIVAYSGRVQAVDAVAAELAAERYHDIKRIAARQHNVARLWDFLRQMVAARRERLLLNLELQKVFQDLLYLMDWMEEMKGRLQSQDLGRHLAGVEDLLQLHELVEADIAVQAERVRAVSASALRFCNPGKEYRPCDPQLVSERVAKLEQSYEALCELAAARRARLEESRRLWRFLWEVGEAEAWVREQQHLLASADTGRDLTGALRLLNKHTALRGEMSGRLGPLKLTLEQGQQLVAEGHPGASQASARAAELQAQWERLEALAEERAQRLAQAASLYQFQADANDMEAWLVDALRLVSSPELGHDEFSTQALARQHRALEEEIRSHRPTLDALREQAAALPPTLSRTPEVQSRVPTLERHYEELQARAGERARALEAALALYTMLSEAGACGLWVEEKEQWLNGLALPERLEDLEVVQQRFETLEPEMNTLAAQITAVNDIAEQLLKANPPGKDRIVNTQEQLNHRWQQFRRLADGKKAALTSALSIQNYHLECTETQAWMREKTKVIESTQGLGNDLAGVLALQRKLAGTERDLEAIAARVGELTREANALAAGHPAQAVAINARLREVQTGWEDLRATMRRREESLGEARRLQDFLRSLDDFQAWLGRTQTAVASEEGPATLPEAEALLAQHAALRGEVERAQSEYSRLRALGEEVTRDQADPQCLFLRQRLEALGTGWEELGRMWESRQGRLAQAHGFQGFLRDARQAEGVLSSQEYVLSHTEMPGTLQAADAAIKKLEDFMSTMDANGERIHGLLEAGRQLVSEGNIHADKIREKADSIERRHKKNQDAAQQFLGRLRDNREQQHFLQDCHELKLWIDEKMLTAQDVSYDEARNLHTKWQKHQAFMAELAANKDWLDKVDKEGRELTLEKPELKALVSEKLRDLHRRWDELETTTQAKARSLFDANRAELFAQSCCALESWLESLQAQLHSDDYGKDLTSVNILLKKQQMLEWEMAVREKEVEAIQAQAKALAQEDQGAGEVERTSRAVEEKFRALCQPMRERCRRLQASREQHQFHRDVEDEILWVTERLPMASSMEHGKDLPSVQLLMKKNQTLQKEIQGHEPRIADLRERQRALGAAAAGPELAELQEMWKRLGHELELRGKRLEDALRAQQFYRDAAEAEAWMGEQELHMMGQEKAKDELSAQAEVKKHQVLEQALADYAQTIHQLAASSQDMIDHEHPESTRISIRQAQVDKLYAGLKELAGERRERLQEHLRLCQLRRELDDLEQWIQEREVVAASHELGQDYEHVTMLRDKFREFSRDTSTIGQERVDSANALANGLIAGGHAARATVAEWKDSLNEAWADLLELLDTRGQVLAAAYELQRFLHGARQALARVQHKQQQLPDGTGRDLNAAEALQRRHCAYEHDIQALSPQVQQVQDDGHRLQKAYAGDKAEEIGRHMQAVAEAWAQLQGSSAARRQLLLDTTDKFRFFKAVRELMLWMDEVNLQMDAQERPRDVSSADLVIKNQQGIKAEIEARADRFSSCIDMGKELLARSHYAAEEISEKLSQLQARRQETAEKWQEKMDWLQLVLEVLVFGRDAGMAEAWLCSQEPLVRSAELGCTVDEVESLIKRHEAFQKSAVAWEERFCALEKLTALEEREKERKRKREEEERRKQPPAPEPTASVPPGDLVGGQTASDTTWDGTQPRPPPSTQAPSVNGVCTDGEPSQPLLGQQRLEHSSFPEGPGPGSGDEANGPRGERQTRTRGPAPSAMPQSRSTESAHAATLPPRGPEPSAQEQMEGMLCRKQEMEAFGKKAANRSWQNVYCVLRRGSLGFYKDAKAASAGVPYHGEVPVSLARAQGSVAFDYRKRKHVFKLGLQDGKEYLFQAKDEAEMSSWLRVVNAAIATASSASGEPEEPVVPSTTRGMTRAMTMPPVSPVGAEGPVVLRSKDGREREREKRFSFFKKNK.

At Ser2 the chain carries N-acetylserine. The interval 2–278 (SSTLSPTDFD…IITYVATYYH (277 aa)) is actin-binding. Ser6 and Ser31 each carry phosphoserine. 2 consecutive Calponin-homology (CH) domains span residues 57–161 (AVQK…LRFQ) and 176–281 (KSAK…HYFS). Spectrin repeat units lie at residues 306-414 (LVEK…LALR), 427-527 (AARF…RERL), 532-639 (ELQK…RLEE), 642-744 (RLWR…QRLA), 749-849 (LYQF…RALE), and 855-954 (YTML…KAAL). Ser959 carries the phosphoserine modification. Spectrin repeat units follow at residues 960 to 1063 (IQNY…SLGE), 1066 to 1169 (RLQD…GRLA), 1174 to 1262 (FQGF…RHKK), 1279 to 1379 (EQQH…ARSL), 1384 to 1485 (RAEL…RRLQ), 1489 to 1586 (EQHQ…RLED), 1589 to 1692 (RAQQ…RLQE), 1696 to 1797 (LCQL…GQVL), 1801 to 1904 (YELQ…QLLL), 1910 to 2010 (FRFF…DWLQ), and 2017 to 2076 (VFGR…EKLT). At Ser1073 the chain carries Phosphoserine. Over residues 2081 to 2096 (REKERKRKREEEERRK) the composition is skewed to basic and acidic residues. Disordered regions lie at residues 2081 to 2222 (REKE…EQME) and 2331 to 2390 (SSAS…KKNK). Residues 2116-2125 (QTASDTTWDG) show a composition bias toward polar residues. Phosphoserine occurs at positions 2171 and 2199. The PH domain maps to 2218–2328 (QEQMEGMLCR…WLRVVNAAIA (111 aa)). At Thr2354 the chain carries Phosphothreonine. The residue at position 2359 (Ser2359) is a Phosphoserine. Residues 2370-2383 (RSKDGREREREKRF) show a composition bias toward basic and acidic residues.

The protein belongs to the spectrin family. In terms of tissue distribution, highly expressed in brain, kidney, pancreas, and liver, and at lower levels in lung and placenta.

Its subcellular location is the cytoplasm. It localises to the cytoskeleton. It is found in the cell cortex. Its function is as follows. Probably plays an important role in neuronal membrane skeleton. This is Spectrin beta chain, non-erythrocytic 2 (SPTBN2) from Homo sapiens (Human).